A 452-amino-acid polypeptide reads, in one-letter code: Gastrin/cholecystokinin type B receptor (452 aa).

The Extracellular segment spans residues M1–R55. N7, N28, and N34 each carry an N-linked (GlcNAc...) asparagine glycan. Residues V56 to L77 form a helical membrane-spanning segment. Over G78 to T85 the chain is Cytoplasmic. Residues V86–P107 traverse the membrane as a helical segment. The Extracellular portion of the chain corresponds to F108 to S129. C125 and C203 are oxidised to a cystine. The chain crosses the membrane as a helical span at residues Y130–L148. The Cytoplasmic portion of the chain corresponds to E149–H168. Residues A169–Y187 form a helical membrane-spanning segment. The Extracellular segment spans residues P188–S217. Residues V218–S240 traverse the membrane as a helical segment. Residues R241–R338 lie on the Cytoplasmic side of the membrane. The interval S255–E285 is disordered. The span at G263–A272 shows a compositional bias: gly residues. The chain crosses the membrane as a helical span at residues M339–W360. At R361–S378 the chain is on the extracellular side. A helical membrane pass occupies residues F379–H399. Topologically, residues R400–G452 are cytoplasmic. Residue C413 is the site of S-palmitoyl cysteine attachment.

It belongs to the G-protein coupled receptor 1 family.

It is found in the cell membrane. In terms of biological role, receptor for gastrin and cholecystokinin. The CCK-B receptors occur throughout the central nervous system where they modulate anxiety, analgesia, arousal, and neuroleptic activity. This receptor mediates its action by association with G proteins that activate a phosphatidylinositol-calcium second messenger system. This chain is Gastrin/cholecystokinin type B receptor (CCKBR), found in Oryctolagus cuniculus (Rabbit).